The primary structure comprises 394 residues: Quinolinate synthase (394 aa).

Iminosuccinate contacts are provided by His57 and Ser74. Cys121 provides a ligand contact to [4Fe-4S] cluster. Residues 153 to 155 (YMN) and Ser174 each bind iminosuccinate. A [4Fe-4S] cluster-binding site is contributed by Cys250. Iminosuccinate-binding positions include 276 to 278 (HPE) and Thr293. Cys340 contributes to the [4Fe-4S] cluster binding site.

Belongs to the quinolinate synthase family. Type 3 subfamily. It depends on [4Fe-4S] cluster as a cofactor.

It is found in the cytoplasm. It carries out the reaction iminosuccinate + dihydroxyacetone phosphate = quinolinate + phosphate + 2 H2O + H(+). It participates in cofactor biosynthesis; NAD(+) biosynthesis; quinolinate from iminoaspartate: step 1/1. Catalyzes the condensation of iminoaspartate with dihydroxyacetone phosphate to form quinolinate. The protein is Quinolinate synthase of Nocardioides sp. (strain ATCC BAA-499 / JS614).